The primary structure comprises 177 residues: ATP synthase subunit delta (177 aa).

It belongs to the ATPase delta chain family. In terms of assembly, F-type ATPases have 2 components, F(1) - the catalytic core - and F(0) - the membrane proton channel. F(1) has five subunits: alpha(3), beta(3), gamma(1), delta(1), epsilon(1). F(0) has three main subunits: a(1), b(2) and c(10-14). The alpha and beta chains form an alternating ring which encloses part of the gamma chain. F(1) is attached to F(0) by a central stalk formed by the gamma and epsilon chains, while a peripheral stalk is formed by the delta and b chains.

Its subcellular location is the cell inner membrane. Its function is as follows. F(1)F(0) ATP synthase produces ATP from ADP in the presence of a proton or sodium gradient. F-type ATPases consist of two structural domains, F(1) containing the extramembraneous catalytic core and F(0) containing the membrane proton channel, linked together by a central stalk and a peripheral stalk. During catalysis, ATP synthesis in the catalytic domain of F(1) is coupled via a rotary mechanism of the central stalk subunits to proton translocation. Functionally, this protein is part of the stalk that links CF(0) to CF(1). It either transmits conformational changes from CF(0) to CF(1) or is implicated in proton conduction. In Sodalis glossinidius (strain morsitans), this protein is ATP synthase subunit delta.